A 28-amino-acid polypeptide reads, in one-letter code: Fibrinogen alpha chain (28 aa).

Ser3 is modified (phosphoserine).

In terms of assembly, heterohexamer; disulfide linked. Contains 2 sets of 3 non-identical chains (alpha, beta and gamma). The 2 heterotrimers are in head to head conformation with the N-termini in a small central domain. In terms of processing, conversion of fibrinogen to fibrin is triggered by thrombin, which cleaves fibrinopeptides A and B from alpha and beta chains, and thus exposes the N-terminal polymerization sites responsible for the formation of the soft clot. The soft clot is converted into the hard clot by factor XIIIA which catalyzes the epsilon-(gamma-glutamyl)lysine cross-linking between gamma chains (stronger) and between alpha chains (weaker) of different monomers. Post-translationally, forms F13A-mediated cross-links between a glutamine and the epsilon-amino group of a lysine residue, forming fibronectin-fibrinogen heteropolymers.

It localises to the secreted. Functionally, cleaved by the protease thrombin to yield monomers which, together with fibrinogen beta (FGB) and fibrinogen gamma (FGG), polymerize to form an insoluble fibrin matrix. Fibrin has a major function in hemostasis as one of the primary components of blood clots. In addition, functions during the early stages of wound repair to stabilize the lesion and guide cell migration during re-epithelialization. Was originally thought to be essential for platelet aggregation, based on in vitro studies using anticoagulated blood. However, subsequent studies have shown that it is not absolutely required for thrombus formation in vivo. Enhances expression of SELP in activated platelets via an ITGB3-dependent pathway. Maternal fibrinogen is essential for successful pregnancy. Fibrin deposition is also associated with infection, where it protects against IFNG-mediated hemorrhage. May also facilitate the immune response via both innate and T-cell mediated pathways. The protein is Fibrinogen alpha chain (FGA) of Canis lupus familiaris (Dog).